A 66-amino-acid chain; its full sequence is MKKGIHPEYVKCQVKCTCGHEFEILSTKESLRVEVCDKCHPFYTGQERNIDRGGKVDKFKKKYGLA.

Positions 16, 18, 36, and 39 each coordinate Zn(2+).

Belongs to the bacterial ribosomal protein bL31 family. Type A subfamily. In terms of assembly, part of the 50S ribosomal subunit. It depends on Zn(2+) as a cofactor.

Binds the 23S rRNA. This is Large ribosomal subunit protein bL31 from Nautilia profundicola (strain ATCC BAA-1463 / DSM 18972 / AmH).